The sequence spans 329 residues: Glycerol-3-phosphate dehydrogenase [NAD(P)+] (329 aa).

S13, W14, H34, and K105 together coordinate NADPH. Sn-glycerol 3-phosphate contacts are provided by K105, G134, and S136. A138 contributes to the NADPH binding site. Residues K189, D242, S252, R253, and N254 each coordinate sn-glycerol 3-phosphate. The active-site Proton acceptor is K189. Position 253 (R253) interacts with NADPH. NADPH is bound by residues V277 and E279.

Belongs to the NAD-dependent glycerol-3-phosphate dehydrogenase family.

The protein resides in the cytoplasm. It catalyses the reaction sn-glycerol 3-phosphate + NAD(+) = dihydroxyacetone phosphate + NADH + H(+). The catalysed reaction is sn-glycerol 3-phosphate + NADP(+) = dihydroxyacetone phosphate + NADPH + H(+). It participates in membrane lipid metabolism; glycerophospholipid metabolism. In terms of biological role, catalyzes the reduction of the glycolytic intermediate dihydroxyacetone phosphate (DHAP) to sn-glycerol 3-phosphate (G3P), the key precursor for phospholipid synthesis. This Legionella pneumophila subsp. pneumophila (strain Philadelphia 1 / ATCC 33152 / DSM 7513) protein is Glycerol-3-phosphate dehydrogenase [NAD(P)+].